Consider the following 159-residue polypeptide: Cytochrome c-type biogenesis protein CcmE (159 aa).

Residues M1–R8 are Cytoplasmic-facing. A helical; Signal-anchor for type II membrane protein membrane pass occupies residues L9–A29. The Periplasmic segment spans residues L30–S159. Residues H130 and Y134 each contribute to the heme site. The interval H130–S159 is disordered.

Belongs to the CcmE/CycJ family.

The protein localises to the cell inner membrane. Its function is as follows. Heme chaperone required for the biogenesis of c-type cytochromes. Transiently binds heme delivered by CcmC and transfers the heme to apo-cytochromes in a process facilitated by CcmF and CcmH. The chain is Cytochrome c-type biogenesis protein CcmE from Citrobacter koseri (strain ATCC BAA-895 / CDC 4225-83 / SGSC4696).